A 609-amino-acid chain; its full sequence is MFS siderochrome iron transporter 1 (609 aa).

Basic and acidic residues-rich tracts occupy residues 1 to 17 and 25 to 34; these read MSAL…EDNT and PHEKEIHETP. Positions 1 to 69 are disordered; the sequence is MSALTKIREG…NDSDVPSEDV (69 aa). Helical transmembrane passes span 81 to 101, 125 to 145, 154 to 174, 182 to 202, 220 to 240, 245 to 265, 300 to 320, 329 to 349, 368 to 390, 407 to 427, 432 to 452, 469 to 489, 496 to 516, and 573 to 593; these read LTWG…LFLI, LMTT…IPMA, AEGF…MAVS, AAQV…GVLA, SPYM…VIDV, WGFG…FLVL, VIGI…FNLA, TGYI…FGVW, SVVA…NYFF, YVNS…GFLI, FYKW…GLMI, IFIS…VLAA, AAAL…GGAI, and IRML…VPML.

Belongs to the major facilitator superfamily.

Its subcellular location is the cell membrane. Functionally, major facilitator transporter involved in extracellular siderophore uptake. Gibberella zeae produces extracellular coprogen-type siderophores as well as the intracellular siderophore ferricrocin. The role of extracellular siderophores is to supply iron to the fungus during plant infection, and the intracellular ferricrocin is required for intracellular iron distribution and storage with a crucial role in ascus and ascospore development. This chain is MFS siderochrome iron transporter 1, found in Gibberella zeae (strain ATCC MYA-4620 / CBS 123657 / FGSC 9075 / NRRL 31084 / PH-1) (Wheat head blight fungus).